Consider the following 486-residue polypeptide: MPSRRRGPSRQQLSRSALPSIQTLVGGGCGNGTGLRNRNGNAIGLPVPPTTALITPGPVRHCQIPDLPVDGSLFFEFLFFIYLLIVLFIQYINIYKTVWWYPYNHPASCTSLNFHLIDYYLAAFITVMLARRLVWALISEATKAGAASTVHYTALILARLVLLTLCGWVLCWTLVNLFRSHSVLNLLFLGYPFGVYVPLYCFHQDSRAHLLLTDYVVQHQAVEEAASNVGSLARSKDFLSLLLESLKEQFNNATPIPTHSCPLSPDLIRNEVECLKADFNHRIKEVLFNSLFSAYYVAFLPLCFVKSTQYYDMRWSCEHLIMVWINAFVMLTTQLLPSKYCDLLHKSAAHLGKWQKLEHGFYSNAPQHIWSENTIWPQGVLVRHSRCLYRAMGPYNVAVPSDVSHARFYFLFHRPLRVLNLLILIEGSVVFYQLYSLLRSEKWNHTLSMALILFCNYYVLFKLLRDRIVLGRAYSYPLNSYELKAN.

Asparagine 31 carries N-linked (GlcNAc...) asparagine glycosylation. 8 helical membrane-spanning segments follow: residues 72–92 (SLFF…IQYI), 110–130 (TSLN…VMLA), 155–175 (LILA…WTLV), 182–202 (SVLN…LYCF), 285–305 (EVLF…LCFV), 317–337 (CEHL…QLLP), 418–438 (VLNL…YSLL), and 444–464 (NHTL…FKLL).

The protein belongs to the TMEM39 family. In terms of assembly, interacts with SACM1L, SEC23A and SEC24A.

It is found in the endoplasmic reticulum membrane. In terms of biological role, regulates autophagy by controlling the spatial distribution and levels of the intracellular phosphatidylinositol 4-phosphate (PtdIns(4)P) pools. Modulates (PtdIns(4)P) levels by regulating the ER-to-Golgi trafficking of the phosphatidylinositide phosphatase SACM1L. This chain is Transmembrane protein 39A (Tmem39a), found in Mus musculus (Mouse).